A 117-amino-acid chain; its full sequence is Large ribosomal subunit protein bL20 (117 aa).

Belongs to the bacterial ribosomal protein bL20 family.

Functionally, binds directly to 23S ribosomal RNA and is necessary for the in vitro assembly process of the 50S ribosomal subunit. It is not involved in the protein synthesizing functions of that subunit. This Vibrio atlanticus (strain LGP32) (Vibrio splendidus (strain Mel32)) protein is Large ribosomal subunit protein bL20.